A 264-amino-acid chain; its full sequence is Glutamate racemase (264 aa).

Residues 10 to 11 and 42 to 43 contribute to the substrate site; these read DS and YG. Cys73 functions as the Proton donor/acceptor in the catalytic mechanism. 74–75 provides a ligand contact to substrate; the sequence is NT. Cys183 serves as the catalytic Proton donor/acceptor. 184-185 is a substrate binding site; that stretch reads TH.

It belongs to the aspartate/glutamate racemases family. Homodimer.

It carries out the reaction L-glutamate = D-glutamate. Its pathway is cell wall biogenesis; peptidoglycan biosynthesis. Provides the (R)-glutamate required for cell wall biosynthesis. This Streptococcus pyogenes serotype M1 protein is Glutamate racemase.